The primary structure comprises 579 residues: MQICGSSVASVAAGTSFQVLGPVCWQQLDLKMAVRVLWGGLSLLRVLWCLLPQTGYVHPDEFFQSPEVMAEDILGVQAARPWEFYPSSSCRSVLFPLLISGSTFWLLRLWEELGPWPGLVSGYALLVGPRLLLTALSFALDGAVYHLAPPMGADRWNALALLSGSYVTLVFYTRTFSNTIEGLLFTWLLVLVSSHVTWGPTRKEPAPGPRWRSWLLGGIVAAGFFNRPTFLAFAVVPLYLWGTRGATNPGLKSLTREALVLLPGAALTAAVFVATDSWYFSSPATSRNLVLTPVNFLHYNLNPQNLARHGTHARLTHLAVNGFLLFGVLHAQALQAAWQRLQVGLQASAQMGLLRALGARSLLSSPRSYLLLLYFMPLALLSAFSHQEARFLIPLLVPLVLLCSPQTQPVPWKGTVVLFNALGALLFGCLHQGGLVPGLEYLEQVVHAPVLPSTPTHYTLLFTHTYMPPRHLLHLPGLGAPVEVVDMGGTEDWALCQTLKSFTRQPACQVAGGPWLCRLFVVTPGTTRRAVEKCSFPFKNETLLFPHLTLEDPPALSSLLSGAWRDHLSLHIVELGEET.

8 consecutive transmembrane segments (helical) span residues 131-151 (LLLT…APPM), 156-173 (WNAL…VFYT), 180-200 (IEGL…TWGP), 216-236 (LGGI…FAVV), 258-278 (ALVL…TDSW), 369-389 (YLLL…HQEA), 391-411 (FLIP…QPVP), and 416-436 (VVLF…GGLV).

This sequence belongs to the glycosyltransferase 22 family. PIGZ subfamily. As to expression, widely expressed at low level, with highest level in brain and colon.

It localises to the endoplasmic reticulum membrane. It participates in glycolipid biosynthesis; glycosylphosphatidylinositol-anchor biosynthesis. Functionally, alpha-1,2-mannosyltransferase that catalyzes the transfer of the fourth mannose, via an alpha-1,2 bond, from a dolichol-phosphate-mannose (Dol-P-Man) to an alpha-D-Man-(1-&gt;2)-alpha-D-Man-(1-&gt;6)-2-PEtn-alpha-D-Man-(1-&gt;4)-alpha-D-GlcN-(1-&gt;6)-(1-radyl,2-acyl-sn-glycero-3-phospho)-2-acyl-inositol (also termed H6) intermediate and participates in the twelfth step of the glycosylphosphatidylinositol-anchor biosynthesis. The presence of a fourth mannose in GPI is facultative, suggesting that it only exists in some tissues. The polypeptide is GPI alpha-1,2-mannosyltransferase 4 (Homo sapiens (Human)).